The following is a 458-amino-acid chain: tRNA modification GTPase MnmE (458 aa).

The (6S)-5-formyl-5,6,7,8-tetrahydrofolate site is built by arginine 22, glutamate 84, and arginine 123. A TrmE-type G domain is found at 220-379 (GIATAIIGRP…LEKAIADLFF (160 aa)). Asparagine 230 contributes to the K(+) binding site. GTP is bound by residues 230–235 (NVGKSS), 249–255 (TDIAGTT), and 274–277 (DTAG). Residue serine 234 participates in Mg(2+) binding. 3 residues coordinate K(+): threonine 249, isoleucine 251, and threonine 254. Residue threonine 255 coordinates Mg(2+). Lysine 458 serves as a coordination point for (6S)-5-formyl-5,6,7,8-tetrahydrofolate.

Belongs to the TRAFAC class TrmE-Era-EngA-EngB-Septin-like GTPase superfamily. TrmE GTPase family. As to quaternary structure, homodimer. Heterotetramer of two MnmE and two MnmG subunits. It depends on K(+) as a cofactor.

It is found in the cytoplasm. Functionally, exhibits a very high intrinsic GTPase hydrolysis rate. Involved in the addition of a carboxymethylaminomethyl (cmnm) group at the wobble position (U34) of certain tRNAs, forming tRNA-cmnm(5)s(2)U34. In Bacillus anthracis, this protein is tRNA modification GTPase MnmE.